The sequence spans 270 residues: HTH-type transcriptional activator AllS (270 aa).

The region spanning 4–61 (LDPETLRTFVSVAETGSFSRAAEKLYKTTATISYRIKLLEDNTGVALFSRTTRSVLLT) is the HTH lysR-type domain. The segment at residues 21 to 40 (FSRAAEKLYKTTATISYRIK) is a DNA-binding region (H-T-H motif).

Belongs to the LysR transcriptional regulatory family.

Its function is as follows. Positive regulator essential for the expression of allD operon. Binds to the allD promoter. This Klebsiella pneumoniae protein is HTH-type transcriptional activator AllS (allS).